The chain runs to 881 residues: Serine/threonine-protein kinase greatwall (881 aa).

The tract at residues 1–20 (MSTVEPLSDEGVAAGPRRIE) is disordered. A Protein kinase domain is found at 30 to 837 (FTIVKPISRG…LKELKHHPLF (808 aa)). ATP contacts are provided by residues 36-44 (ISRGAFGKV) and Lys57. The active-site Proton acceptor is the Asp151. Disordered regions lie at residues 310 to 345 (SPRLEKDVKQTEDEMCSTGTSNSRPPLPSSREVLNS) and 706 to 732 (ITPLQKTPRQGDAGTPYRTPKSVRRGA). A compositionally biased stretch (basic and acidic residues) spans 312–321 (RLEKDVKQTE). Thr743 carries the post-translational modification Phosphothreonine; by CDK1. The AGC-kinase C-terminal domain occupies 838–881 (HGVDWDNLQNQPMPFIPQPDDETDTSYFEARNNAQHLTVSGFSL).

It belongs to the protein kinase superfamily. AGC Ser/Thr protein kinase family. Phosphorylation at Thr-743 by CDK1 during M phase activates its kinase activity. Maximum phosphorylation occurs in prometaphase.

The protein resides in the cytoplasm. It localises to the cytoskeleton. Its subcellular location is the microtubule organizing center. The protein localises to the centrosome. It is found in the nucleus. It catalyses the reaction L-seryl-[protein] + ATP = O-phospho-L-seryl-[protein] + ADP + H(+). The enzyme catalyses L-threonyl-[protein] + ATP = O-phospho-L-threonyl-[protein] + ADP + H(+). Serine/threonine kinase that plays a key role in M phase by acting as a regulator of mitosis entry and maintenance. Acts by promoting the inactivation of protein phosphatase 2A (PP2A) during M phase: does not directly inhibit PP2A but acts by mediating phosphorylation and subsequent activation of ARPP19 and ENSA at 'Ser-62' and 'Ser-67', respectively. ARPP19 and ENSA are phosphatase inhibitors that specifically inhibit the PPP2R2D (PR55-delta) subunit of PP2A. Inactivation of PP2A during M phase is essential to keep cyclin-B1-CDK1 activity high. Following DNA damage, it is also involved in checkpoint recovery by being inhibited. The protein is Serine/threonine-protein kinase greatwall (MASTL) of Gallus gallus (Chicken).